The chain runs to 367 residues: uncharacterized protein (367 aa).

Residues 8 to 28 (VLIGTFVLAAILAVFGFIYWL) form a helical membrane-spanning segment.

The protein localises to the membrane. This is an uncharacterized protein from Bradyrhizobium diazoefficiens (strain JCM 10833 / BCRC 13528 / IAM 13628 / NBRC 14792 / USDA 110).